Reading from the N-terminus, the 211-residue chain is Bacteriorhodopsin (211 aa).

The helical transmembrane segment at 1-19 (IWLWLGTAGMFLGMLYFIA) threads the bilayer. At 20–33 (RGWGETDSRRQKFY) the chain is on the cytoplasmic side. The helical transmembrane segment at 34–52 (IATILITAIAFVNYLAMAL) threads the bilayer. Over 53 to 68 (GFGLTIVEFAGEEHPI) the chain is Extracellular. A helical transmembrane segment spans residues 69–86 (YWARYSDWLFTTPLLLYD). Topologically, residues 87 to 97 (LGLLAGADRNT) are cytoplasmic. The helical transmembrane segment at 98-117 (ITSLVSLDVLMIGTGLVATL) threads the bilayer. The Extracellular portion of the chain corresponds to 118–130 (SAGSGVLSAGAER). A helical membrane pass occupies residues 131 to 150 (LVWWGISTAFLLVLLYFLFS). At 151–168 (SLSGRVADLPSDTRSTFK) the chain is on the cytoplasmic side. The chain crosses the membrane as a helical span at residues 169–187 (TLRNLVTVVWLVYPVWWLI). The Extracellular portion of the chain corresponds to 188-199 (GTEGIGLVGIGI). The helical transmembrane segment at 200-211 (ETAGFMVIDLTA) threads the bilayer.

This sequence belongs to the archaeal/bacterial/fungal opsin family.

It is found in the cell membrane. Its function is as follows. Light-driven proton pump. This is Bacteriorhodopsin (bop) from Halobacterium halobium (strain port).